The chain runs to 102 residues: Putative nuclear receptor corepressor 1-like protein NCOR1P1 (102 aa).

Residues methionine 1–serine 18 show a composition bias toward polar residues. The interval methionine 1–serine 68 is disordered. The stretch at serine 68–valine 100 forms a coiled coil.

This sequence belongs to the N-CoR nuclear receptor corepressors family.

In Homo sapiens (Human), this protein is Putative nuclear receptor corepressor 1-like protein NCOR1P1 (NCOR1P1).